Consider the following 1642-residue polypeptide: Cobra venom factor (1642 aa).

A signal peptide spans 1–22; sequence MERMALYLVAALLIGFPGSSHG. Residues N153, N158, and N209 are each glycosylated (N-linked (GlcNAc...) asparagine). Positions 516, 539, 540, and 542 each coordinate Mg(2+). Disulfide bonds link C544/C801, C609/C644, C677/C704, C678/C711, C691/C712, C857/C1492, C1340/C1468, C1368/C1437, C1485/C1490, C1497/C1569, C1516/C1640, and C1616/C1625. Positions 650–732 are excised as a propeptide; that stretch reads RRRRSSVLLL…QRESELFLAR (83 aa). Residues 654–732 are C3a-like domain; it reads SSVLLLDSNA…QRESELFLAR (79 aa). One can recognise an Anaphylatoxin-like domain in the interval 677-712; sequence CCEDVMHENPMGYTCEKRAKYIQEGDACKAAFLECC. The factor B binding site stretch occupies residues 736–747; sequence EDGFIADSDIIS. Positions 985–1263 are excised as a propeptide; sequence HLIITPSGCG…VMAFQALAEY (279 aa). Residues 985 to 1263 form a C3d-like domain region; the sequence is HLIITPSGCG…VMAFQALAEY (279 aa). The isoglutamyl cysteine thioester (Cys-Gln) cross-link spans 993-996; that stretch reads CGEQ. The tract at residues 1190 to 1253 is factor H binding site; the sequence is VLMAASTGRD…GETYGQTQAT (64 aa). N1346 carries N-linked (GlcNAc...) asparagine glycosylation. In terms of domain architecture, NTR spans 1497–1640; that stretch reads CSSLNHQERI…FSYTLTEFGC (144 aa).

This sequence belongs to the venom complement C3 homolog family. Heterotrimer of alpha, beta and gamma chains; disulfide-linked. Is active with factor B in the presence of factor D. Post-translationally, first processed by the removal of 4 Arg residues by furin-type protease, forming two chains, alpha and gamma/beta precursor, linked by a disulfide bond. Probably, the cobrin cleaves the C3a-like domain and then the C3d-like domain, generating the mature cobra venom factor (CVF). This mature CVF is composed of three chains: alpha, gamma and beta. In terms of processing, contains 3 N-linked oligosaccharide chains, two in the alpha-chain and one in the beta-chain. Glycosylation is not required for the biological activity. However, it contributes to the immunogenicity of CVF. The carbohydrate content is 7.4. The major oligosaccharide is a symmetric fucosylated biantennary complex-type chain with an unusual alpha-galactosylated Le(x) structure at its non-reducing end. As to expression, expressed by the venom gland.

Its subcellular location is the secreted. Its function is as follows. Complement-activating protein in cobra venom. It is a structural and functional analog of complement component C3b, the activated form of C3. It binds factor B (CFB), which is subsequently cleaved by factor D (CFD) to form the bimolecular complex CVF/Bb. CVF/Bb is a C3/C5 convertase that cleaves both complement components C3 and C5. Structurally, it resembles the C3b degradation product C3c, which is not able to form a C3/C5 convertase. Unlike C3b/Bb, CVF/Bb is a stable complex and completely resistant to the actions of complement regulatory factors H (CFH) and I (CFI). Therefore, CVF continuously activates complement resulting in the depletion of complement activity. The chain is Cobra venom factor from Naja kaouthia (Monocled cobra).